Reading from the N-terminus, the 72-residue chain is Cell division protein ZapB (72 aa).

Positions 2–72 (SLEILDQLEG…RSLLGQIDNV (71 aa)) form a coiled coil. The tract at residues 34 to 57 (NQQAQQANDELRSENEQLKGEHNN) is disordered. Positions 42–57 (DELRSENEQLKGEHNN) are enriched in basic and acidic residues.

It belongs to the ZapB family. Homodimer. The ends of the coiled-coil dimer bind to each other, forming polymers. Interacts with FtsZ.

Its subcellular location is the cytoplasm. Its function is as follows. Non-essential, abundant cell division factor that is required for proper Z-ring formation. It is recruited early to the divisome by direct interaction with FtsZ, stimulating Z-ring assembly and thereby promoting cell division earlier in the cell cycle. Its recruitment to the Z-ring requires functional FtsA or ZipA. This chain is Cell division protein ZapB, found in Mannheimia succiniciproducens (strain KCTC 0769BP / MBEL55E).